Reading from the N-terminus, the 236-residue chain is 15,16-dihydrobiliverdin:ferredoxin oxidoreductase (236 aa).

This sequence belongs to the HY2 family.

The catalysed reaction is 15,16-dihydrobiliverdin + oxidized 2[4Fe-4S]-[ferredoxin] = biliverdin IXalpha + reduced 2[4Fe-4S]-[ferredoxin] + 2 H(+). Catalyzes the two-electron reduction of biliverdin IX-alpha at the C15 methine bridge. This Prochlorococcus marinus (strain MIT 9215) protein is 15,16-dihydrobiliverdin:ferredoxin oxidoreductase.